We begin with the raw amino-acid sequence, 512 residues long: Zinc finger CCCH-type with G patch domain-containing protein (512 aa).

A C3H1-type zinc finger spans residues 159–186 (QEMVPCAYFLEGDCKFNDEMCRFSHGEL). The interval 255 to 280 (LEGDDVPSSDSESNSDSDEENEDDVV) is disordered. Acidic residues predominate over residues 256 to 279 (EGDDVPSSDSESNSDSDEENEDDV). Residues 308-354 (TKGIGSKIMLKMGYVVGAGLGSKGEGIVVPVSAQVLPQGRSLDYCMQ) enclose the G-patch domain. Low complexity predominate over residues 407–417 (SSNGSSSSSGS). Positions 407–432 (SSNGSSSSSGSKKPAAKDNQMDLPSC) are disordered.

Its subcellular location is the nucleus. Its function is as follows. Transcription repressor. In Aedes aegypti (Yellowfever mosquito), this protein is Zinc finger CCCH-type with G patch domain-containing protein.